The primary structure comprises 206 residues: Glycerol-3-phosphate acyltransferase (206 aa).

6 helical membrane passes run 4–24 (IIGI…LLVG), 55–75 (IIVL…PILL), 78–98 (ELHP…PVFA), 112–132 (MLLV…LTTL), 137–157 (MVSL…ITIG), and 158–178 (IVEQ…FVIF).

The protein belongs to the PlsY family. As to quaternary structure, probably interacts with PlsX.

It localises to the cell membrane. It carries out the reaction an acyl phosphate + sn-glycerol 3-phosphate = a 1-acyl-sn-glycero-3-phosphate + phosphate. Its pathway is lipid metabolism; phospholipid metabolism. Functionally, catalyzes the transfer of an acyl group from acyl-phosphate (acyl-PO(4)) to glycerol-3-phosphate (G3P) to form lysophosphatidic acid (LPA). This enzyme utilizes acyl-phosphate as fatty acyl donor, but not acyl-CoA or acyl-ACP. The chain is Glycerol-3-phosphate acyltransferase from Exiguobacterium sibiricum (strain DSM 17290 / CCUG 55495 / CIP 109462 / JCM 13490 / 255-15).